We begin with the raw amino-acid sequence, 131 residues long: UPF0102 protein YraN (131 aa).

Polar residues predominate over residues 1-19; that stretch reads MATVPTRSGSPRQLTTKQT. The disordered stretch occupies residues 1 to 20; the sequence is MATVPTRSGSPRQLTTKQTG.

This sequence belongs to the UPF0102 family.

The chain is UPF0102 protein YraN from Escherichia fergusonii (strain ATCC 35469 / DSM 13698 / CCUG 18766 / IAM 14443 / JCM 21226 / LMG 7866 / NBRC 102419 / NCTC 12128 / CDC 0568-73).